Consider the following 124-residue polypeptide: Large ribosomal subunit protein eL31 (124 aa).

A Phosphotyrosine modification is found at tyrosine 102.

Belongs to the eukaryotic ribosomal protein eL31 family.

This Drosophila melanogaster (Fruit fly) protein is Large ribosomal subunit protein eL31 (RpL31).